The sequence spans 932 residues: Protocadherin gamma-A8 (932 aa).

A signal peptide spans 1-29 (MAAPQSRPRRGELILLCALLGTLWEIGRG). 6 Cadherin domains span residues 30–133 (QIRY…NPKF), 134–242 (QVED…APVF), 243–347 (PHPI…RPEV), 348–452 (IITS…PPTF), 453–562 (PHAS…APEI), and 570–682 (DGST…KPSV). At 30 to 692 (QIRYSVPEET…DPNDSSLTLY (663 aa)) the chain is on the extracellular side. Asn-47 carries an N-linked (GlcNAc...) asparagine glycan. Asn-414, Asn-419, and Asn-545 each carry an N-linked (GlcNAc...) asparagine glycan. N-linked (GlcNAc...) asparagine glycosylation occurs at Asn-685. A helical membrane pass occupies residues 693 to 713 (LVVAVAAISCVFLAFVAVLLG). The Cytoplasmic portion of the chain corresponds to 714–932 (LRLRRWHKSH…KKKSGKKEKK (219 aa)). 2 disordered regions span residues 804–841 (ADHG…WPNN) and 902–932 (ATLT…KEKK). The segment covering 810–841 (APPNTDWRFSQAQRPGTSGSQNGDDTGTWPNN) has biased composition (polar residues). The span at 922–932 (NKKKSGKKEKK) shows a compositional bias: basic residues.

The protein localises to the cell membrane. Potential calcium-dependent cell-adhesion protein. May be involved in the establishment and maintenance of specific neuronal connections in the brain. The protein is Protocadherin gamma-A8 (PCDHGA8) of Pan troglodytes (Chimpanzee).